The primary structure comprises 387 residues: MLSRKKTKNEVSKPAEVQGKYVKKETSPLLRNLMPSFIRHGPTIPRRTDLCLPESSASAFSASGDGVVSRNQSFLRTPVQRTPHEVMRRESNRLSAPSSYLVRSLADVPREYGSSQSFLTEVNFAVENGDSGSRYFYSDNFFDGQRRRPLGDRAQEDYRYYEYNHDLFQRMPQNQGRHTSGIGRVTATSLGNLTNHGSEDLPLPPGWSVDWTMRGRKYYIDHNTNTTHWSHPLEREGLPPGWERVESSEFGTYYVDHTNKRAQYRHPCAPSVPRYDQPPPITYQPQQTERNQSLLVPANPYHTAEIPDWLQVYARAPVKYDHILKWELFQLADLDTYQGMLKLLFMKELEQIVKLYEAYRQALVTELENRKQRQQWYAQHHGKKFLS.

Residues Ser95 and Ser138 each carry the phosphoserine modification. WW domains are found at residues 201 to 234 (LPLP…HPLE) and 236 to 269 (EGLP…HPCA). Thr212 bears the Phosphothreonine mark. Residues 323–370 (ILKWELFQLADLDTYQGMLKLLFMKELEQIVKLYEAYRQALVTELENR) enclose the SARAH domain.

As to quaternary structure, homodimer. Stabilized through interaction with STK3/MST2 or STK4/MST1. Interacts (via SARAH domain) with isoform 1 of NEK2. Interacts with ESR1 only in the presence of STK3/MST2. Interacts with WTIP and AJUBA. Phosphorylated by STK3/MST2 and STK4/MST1. Phosphorylation is not required for SAV1 stability and may increase the number of protein binding sites on the scaffold molecule.

It is found in the nucleus. The protein localises to the cytoplasm. In terms of biological role, regulator of STK3/MST2 and STK4/MST1 in the Hippo signaling pathway which plays a pivotal role in organ size control and tumor suppression by restricting proliferation and promoting apoptosis. The core of this pathway is composed of a kinase cascade wherein STK3/MST2 and STK4/MST1, in complex with its regulatory protein SAV1, phosphorylates and activates LATS1/2 in complex with its regulatory protein MOB1, which in turn phosphorylates and inactivates YAP1 oncoprotein and WWTR1/TAZ. Phosphorylation of YAP1 by LATS1/2 inhibits its translocation into the nucleus to regulate cellular genes important for cell proliferation, cell death, and cell migration. SAV1 is required for STK3/MST2 and STK4/MST1 activation and promotes cell-cycle exit and terminal differentiation in developing epithelial tissues. Plays a role in centrosome disjunction by regulating the localization of NEK2 to centrosomes, and its ability to phosphorylate CROCC and CEP250. In conjunction with STK3/MST2, activates the transcriptional activity of ESR1 through the modulation of its phosphorylation. The polypeptide is Protein salvador homolog 1 (Rattus norvegicus (Rat)).